Reading from the N-terminus, the 219-residue chain is Membrin-12 (219 aa).

At Ala-2 the chain carries N-acetylalanine. At Ala-2–Thr-197 the chain is on the cytoplasmic side. The chain crosses the membrane as a helical; Anchor for type IV membrane protein span at residues Trp-198–Ile-215. Topologically, residues Arg-216–Arg-219 are vesicular.

This sequence belongs to the GOSR2 family.

It is found in the golgi apparatus membrane. Its function is as follows. Involved in transport of proteins from the cis/medial-Golgi to the trans-Golgi network. The polypeptide is Membrin-12 (MEMB12) (Arabidopsis thaliana (Mouse-ear cress)).